The sequence spans 881 residues: MLRSLLLLAPLVGAAVIGARDHSQECPGYKATNIREGRDSLTADLTLAGKPCNTYGTDLKNLKLLVEYQTDKRLHVKIYDADEEVYQVPESVLPRVDGKGGSSKKSALKFDYQANPFSFKVKRGGEVLFDTSGSNLIFQSQYLSLRTWLPEDPNLYGLGEHTDSLRLETTNYTRTLWNRDAYAIPEKTNLYGTHPVYYDHRGQHGTHGVFLLNSNGMDIKIDKTKDGKQYLEYNTLGGVFDFYFFTGATPKDASIEYAKVVGLPAMQSYWTFGFHQCRYGYRDVFEVAEVVYNYSQAKIPLETMWTDIDYMDRRRVFTLDPERFPLEKMRELVSYLHNHNQHYIVMVDPAVSVSDNVGYNDGMEQGIFLQTQNGSLYKGAVWPGVTAYPDWFHPDIQKYWNDQFAKFFDPKTGVDIDGLWIDMNEAANFCPYPCSDPEGYARDNDLPPAAPPVRPSNPRPLPGFPGDFQPSSSSKRSTKGSKVGLPNRDLINPPYMIRNEAGSLSNKTINTDIIHAGEGYAEYDTHNLYGTMMSSASRNAMQHRRPGVRPLVITRSTYAGAGAHVGHWLGDNISEWSKYRISISQMLAFASMFQVPMIGSDVCGFGGNTTEELCARWARLGAFYTFFRNHNEITGIPQEFYRWPTVAESARKAIDIRYRLLDYIYTAFHRQTQTGEPFLQPMFYLYPKDKNTFSNQLQFFYGDAILVSPVTDGSQTSVDAYFPDDIFYDWHTGAALRGRGANVTLSNIDVTEIPIHIRGGSIIPVRSESAMTTTELRKKGFELIIAPGLDGTASGSLYLDDGDSIEPRATLELEFTYRKGHLQVKGKFGFRTEVKINAVTLLGQSAPASKSADVASLDSGRQAVTIKTSLDLTGPSEIDLS.

Residues 1-14 form the signal peptide; sequence MLRSLLLLAPLVGA. Residues Asn171, Asn293, and Asn373 are each glycosylated (N-linked (GlcNAc...) asparagine). Asp422 acts as the Nucleophile in catalysis. Glu425 is a catalytic residue. The interval 440–485 is disordered; it reads YARDNDLPPAAPPVRPSNPRPLPGFPGDFQPSSSSKRSTKGSKVGL. Residues 448 to 463 show a composition bias toward pro residues; that stretch reads PAAPPVRPSNPRPLPG. The N-linked (GlcNAc...) asparagine glycan is linked to Asn506. Catalysis depends on Asp571, which acts as the Proton donor. Asn572, Asn608, and Asn742 each carry an N-linked (GlcNAc...) asparagine glycan.

The protein belongs to the glycosyl hydrolase 31 family.

The protein localises to the secreted. It catalyses the reaction Hydrolysis of terminal, non-reducing (1-&gt;4)-linked alpha-D-glucose residues with release of alpha-D-glucose.. The catalysed reaction is Hydrolysis of terminal, non-reducing beta-D-glucosyl residues with release of beta-D-glucose.. In terms of biological role, glucosidase involved in the degradation of cellulosic biomass. Has both alpha- and beta-glucosidase activity. This is Probable alpha/beta-glucosidase agdC (agdC) from Aspergillus fumigatus (strain CBS 144.89 / FGSC A1163 / CEA10) (Neosartorya fumigata).